Consider the following 200-residue polypeptide: Rho GDP-dissociation inhibitor 2 (200 aa).

Residues 1–40 (MTEKAPEPHVEEDDDELDGKLNYKPPPQKSLKELQEMDKD) form a disordered region. T2 is subject to N-acetylthreonine. Position 20 is an N6-acetyllysine (K20). Y23 carries the post-translational modification Phosphotyrosine. N6-acetyllysine is present on residues K24, K39, K46, K101, and K123. Residues 30–40 (SLKELQEMDKD) are compositionally biased toward basic and acidic residues. S144 carries the post-translational modification Phosphoserine. At K174 the chain carries N6-acetyllysine.

It belongs to the Rho GDI family. As to quaternary structure, interacts with RHOA. Interacts with RAC1. Interacts with RAC2. Interacts with CDC42.

The protein localises to the cytoplasm. Its subcellular location is the cytosol. Its function is as follows. Regulates the GDP/GTP exchange reaction of the Rho proteins by inhibiting the dissociation of GDP from them, and the subsequent binding of GTP to them. Regulates reorganization of the actin cytoskeleton mediated by Rho family members. This Bos taurus (Bovine) protein is Rho GDP-dissociation inhibitor 2 (ARHGDIB).